The sequence spans 444 residues: DNA primase DnaG (444 aa).

The Toprim domain occupies 186-260 (DSIIVVEGRN…EVDFVARAPP (75 aa)). Mg(2+) is bound by residues Glu-192, Asp-234, and Asp-236.

This sequence belongs to the archaeal DnaG primase family. In terms of assembly, forms a ternary complex with MCM helicase and DNA. Component of the archaeal exosome complex. Mg(2+) is required as a cofactor.

It catalyses the reaction ssDNA + n NTP = ssDNA/pppN(pN)n-1 hybrid + (n-1) diphosphate.. Its function is as follows. RNA polymerase that catalyzes the synthesis of short RNA molecules used as primers for DNA polymerase during DNA replication. Also part of the exosome, which is a complex involved in RNA degradation. Acts as a poly(A)-binding protein that enhances the interaction between heteromeric, adenine-rich transcripts and the exosome. The protein is DNA primase DnaG of Thermoplasma volcanium (strain ATCC 51530 / DSM 4299 / JCM 9571 / NBRC 15438 / GSS1).